The primary structure comprises 414 residues: MLAKQIKKANSRSTLLRKSLLFAAPIILAVSSSSVYALTQVSNFGTNPGNLQMFKHVPSGMPANAPLVVALHGCTQTAAAYEASGWSALGNTHKFYVVYPQQQSGNNSNKCFNWFEPGDITRGQGEALSIKQMVDNMKANHSIDPSRVYVTGLSAGAFMTTVMAATYPDVFAGAAPIAGGPYKCATSMTSAFTCMSPGVDKTPAAWGDLARGGYSGYNGPKPKISIWHGSSDYTVAPANQNETVEQFTNYHGIDQTPDVSDTVGGFPHKVYKSANGTPLVETYTITGMGHGTPVDPGTGANQCGTAGAYILDVNVCSSYYIGQFFGIIGGGGTTTTTTSGNVTTTTAATTTTTTATQGYTQTTSATVTNHYVAGRINVTQYNVLGARYGYVTTIPLYYCPSLSGWTDKANCSPI.

Residues Met-1–Ala-37 form the signal peptide. Ser-154 functions as the Charge relay system in the catalytic mechanism.

This sequence belongs to the AB hydrolase superfamily. Lipase family.

The protein localises to the secreted. In terms of biological role, specific for poly(hydroxyalkanoic acid) consisting of monomers of four or five carbon atoms and for P-nitrophenylbutyrate as substrates. This chain is Poly(3-hydroxyalkanoate) depolymerase C (phaZ1), found in Paucimonas lemoignei (Pseudomonas lemoignei).